The following is a 531-amino-acid chain: Peptide chain release factor 3 (531 aa).

Residues 13–282 (AKRRTFAIIS…TLIKYSPPPK (270 aa)) form the tr-type G domain. GTP-binding positions include 22 to 29 (SHPDAGKT), 90 to 94 (DTPGH), and 144 to 147 (NKLD).

Belongs to the TRAFAC class translation factor GTPase superfamily. Classic translation factor GTPase family. PrfC subfamily.

Its subcellular location is the cytoplasm. Functionally, increases the formation of ribosomal termination complexes and stimulates activities of RF-1 and RF-2. It binds guanine nucleotides and has strong preference for UGA stop codons. It may interact directly with the ribosome. The stimulation of RF-1 and RF-2 is significantly reduced by GTP and GDP, but not by GMP. The protein is Peptide chain release factor 3 of Psychrobacter arcticus (strain DSM 17307 / VKM B-2377 / 273-4).